The following is a 109-amino-acid chain: Cell division protein ZapA (109 aa).

The stretch at 21-99 (PEQRDALNQA…IEQALLEQGR (79 aa)) forms a coiled coil.

The protein belongs to the ZapA family. Type 1 subfamily. In terms of assembly, homodimer. Interacts with FtsZ.

Its subcellular location is the cytoplasm. In terms of biological role, activator of cell division through the inhibition of FtsZ GTPase activity, therefore promoting FtsZ assembly into bundles of protofilaments necessary for the formation of the division Z ring. It is recruited early at mid-cell but it is not essential for cell division. The sequence is that of Cell division protein ZapA from Klebsiella pneumoniae (strain 342).